Here is a 237-residue protein sequence, read N- to C-terminus: MNDADASIQIQQMVRFIRQEAEEKANEISISSEEEFNIEKLQLVEAEKKKIRQEYEKKEKQVDVRKKIDYSMQLNASRIKVLQAQDDIVNAMKEEAAKQLLKVSQHGFFNHHHHQYKHLLKDLIVQCLLRLKEPAVLLRCREEDLDIVESMLDDASEEYCKKAKVHAPEIIVDKDIFLPPAPSDDDPHALSCAGGVVLASRDGKIVCENTLDARLEVAFRNKLPEIRKSLFGKVGAA.

Met1 carries the post-translational modification N-acetylmethionine. A coiled-coil region spans residues 9 to 67 (QIQQMVRFIRQEAEEKANEISISSEEEFNIEKLQLVEAEKKKIRQEYEKKEKQVDVRKK).

The protein belongs to the V-ATPase E subunit family. As to quaternary structure, V-ATPase is a heteromultimeric enzyme composed of a peripheral catalytic V1 complex (components A to H) attached to an integral membrane V0 proton pore complex (components: a, c, c'', d and e).

It localises to the vacuole membrane. Its function is as follows. Subunit of the peripheral V1 complex of vacuolar ATPase essential for assembly or catalytic function. V-ATPase is responsible for acidifying a variety of intracellular compartments in eukaryotic cells. This is V-type proton ATPase subunit E3 (VHA-E3) from Arabidopsis thaliana (Mouse-ear cress).